Reading from the N-terminus, the 225-residue chain is Adenosylcobinamide-GDP ribazoletransferase (225 aa).

A run of 5 helical transmembrane segments spans residues 34–54 (FVGI…FWFL), 93–113 (NLGT…FYSF), 116–136 (VSAF…LLLL), 165–185 (PLLL…AITI), and 204–224 (VVGA…YFLA).

This sequence belongs to the CobS family. The cofactor is Mg(2+).

The protein resides in the cell membrane. It carries out the reaction alpha-ribazole + adenosylcob(III)inamide-GDP = adenosylcob(III)alamin + GMP + H(+). The catalysed reaction is alpha-ribazole 5'-phosphate + adenosylcob(III)inamide-GDP = adenosylcob(III)alamin 5'-phosphate + GMP + H(+). It participates in cofactor biosynthesis; adenosylcobalamin biosynthesis; adenosylcobalamin from cob(II)yrinate a,c-diamide: step 7/7. In terms of biological role, joins adenosylcobinamide-GDP and alpha-ribazole to generate adenosylcobalamin (Ado-cobalamin). Also synthesizes adenosylcobalamin 5'-phosphate from adenosylcobinamide-GDP and alpha-ribazole 5'-phosphate. The chain is Adenosylcobinamide-GDP ribazoletransferase (cobS1) from Archaeoglobus fulgidus (strain ATCC 49558 / DSM 4304 / JCM 9628 / NBRC 100126 / VC-16).